The chain runs to 192 residues: MSEYLLLLVGTVLVNNFVLVKFLGLCPFMGVSSKLESAIGMSMATTFVLTLASILSYLVDTYLLTPFDLSYLRTMAFILVIAVVVQFTEMLVQKTSAALHRALGIYLPLITTNCAVLGVALLNVNEKHDFIESAIYGFGAAVGFSIVLILFSAMRERLAAADVPAPFKGGAIAMITAGLMSLAFMGFTGLVN.

Helical transmembrane passes span 5-25, 39-59, 72-92, 102-122, 134-154, and 171-191; these read LLLL…FLGL, IGMS…SYLV, LRTM…EMLV, ALGI…VALL, AIYG…FSAM, and AIAM…TGLV.

Belongs to the NqrDE/RnfAE family. In terms of assembly, the complex is composed of six subunits: RnfA, RnfB, RnfC, RnfD, RnfE and RnfG.

Its subcellular location is the cell inner membrane. Its function is as follows. Part of a membrane-bound complex that couples electron transfer with translocation of ions across the membrane. In Shewanella loihica (strain ATCC BAA-1088 / PV-4), this protein is Ion-translocating oxidoreductase complex subunit A.